We begin with the raw amino-acid sequence, 279 residues long: RRP15-like protein (279 aa).

Disordered regions lie at residues 1 to 40 (MALL…GANA), 56 to 120 (GPTV…TERR), and 200 to 279 (KSTA…DEED). The segment covering 73-83 (KTSEAAKKPGF) has biased composition (basic and acidic residues). Acidic residues-rich tracts occupy residues 93-104 (KEEDDDDEEDGD) and 213-224 (QETDDDDEDDTA). Residues 232 to 245 (KKSEWNVLREDFMT) show a composition bias toward basic and acidic residues. Over residues 267 to 279 (DEADDSDDDDEED) the composition is skewed to acidic residues.

The protein belongs to the RRP15 family.

This is RRP15-like protein from Drosophila pseudoobscura pseudoobscura (Fruit fly).